A 351-amino-acid polypeptide reads, in one-letter code: Biotin synthase (351 aa).

In terms of domain architecture, Radical SAM core spans 48-265 (NKVRIHILDN…LCMFRLINPD (218 aa)). Residues Cys-63, Cys-67, and Cys-70 each coordinate [4Fe-4S] cluster. 4 residues coordinate [2Fe-2S] cluster: Cys-107, Cys-139, Cys-199, and Arg-269.

The protein belongs to the radical SAM superfamily. Biotin synthase family. As to quaternary structure, homodimer. The cofactor is [4Fe-4S] cluster. [2Fe-2S] cluster is required as a cofactor.

The enzyme catalyses (4R,5S)-dethiobiotin + (sulfur carrier)-SH + 2 reduced [2Fe-2S]-[ferredoxin] + 2 S-adenosyl-L-methionine = (sulfur carrier)-H + biotin + 2 5'-deoxyadenosine + 2 L-methionine + 2 oxidized [2Fe-2S]-[ferredoxin]. It participates in cofactor biosynthesis; biotin biosynthesis; biotin from 7,8-diaminononanoate: step 2/2. Functionally, catalyzes the conversion of dethiobiotin (DTB) to biotin by the insertion of a sulfur atom into dethiobiotin via a radical-based mechanism. The chain is Biotin synthase from Leptospira interrogans serogroup Icterohaemorrhagiae serovar copenhageni (strain Fiocruz L1-130).